Here is a 95-residue protein sequence, read N- to C-terminus: Co-chaperonin GroES (95 aa).

Belongs to the GroES chaperonin family. In terms of assembly, heptamer of 7 subunits arranged in a ring. Interacts with the chaperonin GroEL.

The protein resides in the cytoplasm. Functionally, together with the chaperonin GroEL, plays an essential role in assisting protein folding. The GroEL-GroES system forms a nano-cage that allows encapsulation of the non-native substrate proteins and provides a physical environment optimized to promote and accelerate protein folding. GroES binds to the apical surface of the GroEL ring, thereby capping the opening of the GroEL channel. This chain is Co-chaperonin GroES, found in Syntrophotalea carbinolica (strain DSM 2380 / NBRC 103641 / GraBd1) (Pelobacter carbinolicus).